The primary structure comprises 1382 residues: DNA-directed RNA polymerase subunit beta (1382 aa).

The protein belongs to the RNA polymerase beta chain family. As to quaternary structure, the RNAP catalytic core consists of 2 alpha, 1 beta, 1 beta' and 1 omega subunit. When a sigma factor is associated with the core the holoenzyme is formed, which can initiate transcription.

The enzyme catalyses RNA(n) + a ribonucleoside 5'-triphosphate = RNA(n+1) + diphosphate. DNA-dependent RNA polymerase catalyzes the transcription of DNA into RNA using the four ribonucleoside triphosphates as substrates. The polypeptide is DNA-directed RNA polymerase subunit beta (Aliarcobacter butzleri (strain RM4018) (Arcobacter butzleri)).